The chain runs to 500 residues: Probable cytosol aminopeptidase (500 aa).

Lys-264 and Asp-269 together coordinate Mn(2+). Residue Lys-276 is part of the active site. Positions 287, 346, and 348 each coordinate Mn(2+). The active site involves Arg-350.

The protein belongs to the peptidase M17 family. Mn(2+) serves as cofactor.

Its subcellular location is the cytoplasm. The enzyme catalyses Release of an N-terminal amino acid, Xaa-|-Yaa-, in which Xaa is preferably Leu, but may be other amino acids including Pro although not Arg or Lys, and Yaa may be Pro. Amino acid amides and methyl esters are also readily hydrolyzed, but rates on arylamides are exceedingly low.. The catalysed reaction is Release of an N-terminal amino acid, preferentially leucine, but not glutamic or aspartic acids.. Presumably involved in the processing and regular turnover of intracellular proteins. Catalyzes the removal of unsubstituted N-terminal amino acids from various peptides. This chain is Probable cytosol aminopeptidase, found in Rhodopseudomonas palustris (strain ATCC BAA-98 / CGA009).